Consider the following 668-residue polypeptide: Packaging protein UL32 homolog (668 aa).

The segment covering 1–10 has biased composition (polar residues); it reads MNPSTHVSSN. The segment at 1–35 is disordered; the sequence is MNPSTHVSSNGPTTPPHGPHTTFLPPTSPAPSTSS. Positions 19-35 are enriched in low complexity; sequence PHTTFLPPTSPAPSTSS. Residues Cys-200, Cys-203, His-276, and Cys-282 each contribute to the Zn(2+) site. Residues 200 to 282 are zinc finger 1; sequence CNLCAIISIC…FHLHFFINRC (83 aa). Positions 401–430 are disordered; that stretch reads IEEEEDEEGGEKGGDDPGRHNGGGTSGGFS. Basic and acidic residues predominate over residues 410-419; sequence GEKGGDDPGR. Zn(2+) contacts are provided by Cys-459, Cys-462, His-567, and Cys-574. The segment at 459–574 is zinc finger 2; sequence CLLCELMACS…YKHFFCDPQC (116 aa).

It belongs to the herpesviridae UL32 protein family.

It localises to the host cytoplasm. The protein resides in the host nucleus. Functionally, plays a role in efficient localization of neo-synthesized capsids to nuclear replication compartments, thereby controlling cleavage and packaging of virus genomic DNA. This is Packaging protein UL32 homolog (UL52) from Homo sapiens (Human).